Here is a 427-residue protein sequence, read N- to C-terminus: Chaperone SurA (427 aa).

The first 13 residues, Met1–Ala13, serve as a signal peptide directing secretion. 2 consecutive PpiC domains span residues Ser164–Glu265 and Arg275–Gly374.

Its subcellular location is the periplasm. The catalysed reaction is [protein]-peptidylproline (omega=180) = [protein]-peptidylproline (omega=0). Chaperone involved in the correct folding and assembly of outer membrane proteins. Recognizes specific patterns of aromatic residues and the orientation of their side chains, which are found more frequently in integral outer membrane proteins. May act in both early periplasmic and late outer membrane-associated steps of protein maturation. This chain is Chaperone SurA, found in Pseudomonas putida (strain ATCC 47054 / DSM 6125 / CFBP 8728 / NCIMB 11950 / KT2440).